Consider the following 904-residue polypeptide: Exo-beta-D-glucosaminidase (904 aa).

The signal sequence occupies residues methionine 1–alanine 32. Residues alanine 28–glycine 49 form a disordered region. The Proton donor role is filled by aspartate 476. Residue glutamate 545 is the Nucleophile of the active site. Positions serine 813–valine 828 are enriched in low complexity. The disordered stretch occupies residues serine 813–serine 833.

It belongs to the glycosyl hydrolase 2 family. As to quaternary structure, monomer.

The protein localises to the secreted. The enzyme catalyses Hydrolysis of chitosan or chitosan oligosaccharides to remove successive D-glucosamine residues from the non-reducing termini.. In terms of biological role, hydrolyzes chitosan and chitooligosaccharides with retention of anomeric configuration. Has no beta-mannosidase activity. This Streptomyces avermitilis (strain ATCC 31267 / DSM 46492 / JCM 5070 / NBRC 14893 / NCIMB 12804 / NRRL 8165 / MA-4680) protein is Exo-beta-D-glucosaminidase.